The primary structure comprises 717 residues: Polyribonucleotide nucleotidyltransferase (717 aa).

Positions 486 and 492 each coordinate Mg(2+). Positions 553–612 (PKIIQLQIDIDKISLVIGSTGKTVKAITDEFEVRVQIEQDGRITLFGTDSLKMQKAKARI) constitute a KH domain. The 94-residue stretch at 622-715 (GEIYEGVVKK…KFGKIELELV (94 aa)) folds into the S1 motif domain. A disordered region spans residues 650–683 (SNRPKSRDDRYGDMRHSRYGSGRHSRYGRDSRNT). Positions 654–665 (KSRDDRYGDMRH) are enriched in basic and acidic residues. The span at 666-675 (SRYGSGRHSR) shows a compositional bias: basic residues.

This sequence belongs to the polyribonucleotide nucleotidyltransferase family. Mg(2+) serves as cofactor.

The protein localises to the cytoplasm. It catalyses the reaction RNA(n+1) + phosphate = RNA(n) + a ribonucleoside 5'-diphosphate. In terms of biological role, involved in mRNA degradation. Catalyzes the phosphorolysis of single-stranded polyribonucleotides processively in the 3'- to 5'-direction. This chain is Polyribonucleotide nucleotidyltransferase, found in Borrelia turicatae (strain 91E135).